We begin with the raw amino-acid sequence, 259 residues long: HTH-type transcriptional regulator Rv1719 (259 aa).

The region spanning 13–75 (IQVIARAAEL…GARGPYRLGP (63 aa)) is the HTH iclR-type domain. A DNA-binding region (H-T-H motif) is located at residues 35-54 (QAEIGERVGMARSTVSRILN). The IclR-ED domain occupies 88–259 (VVTEMHPFLT…AWFNGTEDRK (172 aa)).

Homodimer.

Binds to the upstream region of Rv1714 and probably modulates the expression of the downstream gene(s). The polypeptide is HTH-type transcriptional regulator Rv1719 (Mycobacterium tuberculosis (strain ATCC 25618 / H37Rv)).